Here is a 396-residue protein sequence, read N- to C-terminus: Chalcone synthase B (396 aa).

Residue Cys-170 is part of the active site.

The protein belongs to the thiolase-like superfamily. Chalcone/stilbene synthases family.

The enzyme catalyses (E)-4-coumaroyl-CoA + 3 malonyl-CoA + 3 H(+) = 2',4,4',6'-tetrahydroxychalcone + 3 CO2 + 4 CoA. It functions in the pathway secondary metabolite biosynthesis; flavonoid biosynthesis. In terms of biological role, the primary product of this enzyme is 4,2',4',6'-tetrahydroxychalcone (also termed naringenin-chalcone or chalcone) which can under specific conditions spontaneously isomerize into naringenin. This is Chalcone synthase B (CHSB) from Ipomoea purpurea (Common morning glory).